The sequence spans 102 residues: Small ribosomal subunit protein uS10 (102 aa).

This sequence belongs to the universal ribosomal protein uS10 family. Part of the 30S ribosomal subunit.

Functionally, involved in the binding of tRNA to the ribosomes. This is Small ribosomal subunit protein uS10 from Pyrococcus horikoshii (strain ATCC 700860 / DSM 12428 / JCM 9974 / NBRC 100139 / OT-3).